We begin with the raw amino-acid sequence, 396 residues long: Lysophospholipid transporter LplT (396 aa).

The Periplasmic segment spans residues 1–17; that stretch reads MSESVHTNTSLWSKGMK. The helical transmembrane segment at 18–38 threads the bilayer; the sequence is AVIVAQFLSAFGDNALLFATL. Over 39-52 the chain is Cytoplasmic; that stretch reads ALLKAQFYPEWSQP. A helical transmembrane segment spans residues 53–73; that stretch reads ILQMVFVGAYILLAPFVGQVA. Residues 74–90 are Periplasmic-facing; it reads DSFAKGRVMMFANGLKL. Residues 91–111 form a helical membrane-spanning segment; the sequence is LGAASICFGINPFLGYTLVGV. The Cytoplasmic segment spans residues 112–144; it reads GAAAYSPAKYGILGELTTGSKLVKANGLMEASA. The helical transmembrane segment at 145 to 165 threads the bilayer; the sequence is IAAILLGSVAGGVLADWHVLV. Position 166 (Ala166) is a topological domain, periplasmic. A helical membrane pass occupies residues 167-187; sequence LAACALAYGGAVVANIYIPKL. Topologically, residues 188–225 are cytoplasmic; sequence AARPGQSWNLINMTRSFLNACTSLWCNGETRFSLVGTS. Residues 226–246 form a helical membrane-spanning segment; that stretch reads LFWGAGVTLRFLLVLWVPVAL. The Periplasmic portion of the chain corresponds to 247-255; the sequence is GITDNATPT. A helical membrane pass occupies residues 256–276; it reads YLNAMVAIGIVVGAGAAAKLV. At 277 to 279 the chain is on the cytoplasmic side; it reads TLE. Residues 280 to 300 form a helical membrane-spanning segment; sequence TVSRCMPAGILIGVVVPIFSL. Residues 301-303 are Periplasmic-facing; sequence QHE. The chain crosses the membrane as a helical span at residues 304 to 324; it reads LLPAYALLMLIGVLGGFFVVP. The Cytoplasmic portion of the chain corresponds to 325–342; that stretch reads LNALLQERGKKSVGAGNA. A helical transmembrane segment spans residues 343-363; it reads IAVQNLGENSAMLLMLGIYSL. At 364–365 the chain is on the periplasmic side; the sequence is AV. Residues 366-386 form a helical membrane-spanning segment; it reads MVGIPVVPIGIGFGALFALAI. The Cytoplasmic portion of the chain corresponds to 387-396; the sequence is TALWIWQRRH.

The protein belongs to the major facilitator superfamily. LplT (TC 2.A.1.42) family.

Its subcellular location is the cell inner membrane. Catalyzes the facilitated diffusion of 2-acyl-glycero-3-phosphoethanolamine (2-acyl-GPE) into the cell. The sequence is that of Lysophospholipid transporter LplT from Shigella flexneri.